The following is a 442-amino-acid chain: Histidine--tRNA ligase (442 aa).

The protein belongs to the class-II aminoacyl-tRNA synthetase family. Homodimer.

Its subcellular location is the cytoplasm. The catalysed reaction is tRNA(His) + L-histidine + ATP = L-histidyl-tRNA(His) + AMP + diphosphate + H(+). This chain is Histidine--tRNA ligase (hisS), found in Treponema pallidum (strain Nichols).